The primary structure comprises 414 residues: Glutamyl-tRNA reductase (414 aa).

Substrate-binding positions include 49 to 52 (TCNR), serine 108, 113 to 115 (EPQ), and glutamine 119. The active-site Nucleophile is the cysteine 50. An NADP(+)-binding site is contributed by 188–193 (GAGQTG).

The protein belongs to the glutamyl-tRNA reductase family. In terms of assembly, homodimer.

The enzyme catalyses (S)-4-amino-5-oxopentanoate + tRNA(Glu) + NADP(+) = L-glutamyl-tRNA(Glu) + NADPH + H(+). It participates in porphyrin-containing compound metabolism; protoporphyrin-IX biosynthesis; 5-aminolevulinate from L-glutamyl-tRNA(Glu): step 1/2. Catalyzes the NADPH-dependent reduction of glutamyl-tRNA(Glu) to glutamate 1-semialdehyde (GSA). The sequence is that of Glutamyl-tRNA reductase from Francisella philomiragia subsp. philomiragia (strain ATCC 25017 / CCUG 19701 / FSC 153 / O#319-036).